Consider the following 335-residue polypeptide: Aliphatic sulfonates import ATP-binding protein SsuB (335 aa).

The 220-residue stretch at 74-293 (VRLTRVSKRY…ARASAAFAAL (220 aa)) folds into the ABC transporter domain. 106–113 (GRSGCGKS) contributes to the ATP binding site. The segment at 308-335 (APAAPNAAGPEGASRGRAAPASGLRWAV) is disordered.

It belongs to the ABC transporter superfamily. Aliphatic sulfonates importer (TC 3.A.1.17.2) family. In terms of assembly, the complex is composed of two ATP-binding proteins (SsuB), two transmembrane proteins (SsuC) and a solute-binding protein (SsuA).

The protein localises to the cell inner membrane. The enzyme catalyses ATP + H2O + aliphatic sulfonate-[sulfonate-binding protein]Side 1 = ADP + phosphate + aliphatic sulfonateSide 2 + [sulfonate-binding protein]Side 1.. In terms of biological role, part of the ABC transporter complex SsuABC involved in aliphatic sulfonates import. Responsible for energy coupling to the transport system. This chain is Aliphatic sulfonates import ATP-binding protein SsuB, found in Burkholderia mallei (strain ATCC 23344).